A 148-amino-acid polypeptide reads, in one-letter code: uncharacterized protein (148 aa).

The N-terminal stretch at Met1–Ser22 is a signal peptide.

This is an uncharacterized protein from Saccharomyces cerevisiae (strain ATCC 204508 / S288c) (Baker's yeast).